The following is a 207-amino-acid chain: MSTTTPNIWIAASDGKTDVVLKHLDSGISPNAADENGYTPIHAAVSYGHSDLLKILVERGGDINIRDQDGETPLFVCEKLEIAHDLINQYNADTTVKNNDGLIAAQVIEANGEFPELAKYLYSFTDLEPKDVNTLPNDTKIEYAKLMTEQEMDEEAGQPLLDQKAKAEIDRILALRDTGVNVDDELRKILTGALSGHFERNVRPRSN.

2 ANK repeats span residues 36–65 (NGYTPIHAAVSYGHSDLLKILVERGGDINI) and 69–98 (DGETPLFVCEKLEIAHDLINQYNADTTVKN).

The protein localises to the cytoplasm. The protein resides in the nucleus. This Schizosaccharomyces pombe (strain 972 / ATCC 24843) (Fission yeast) protein is Ankyrin repeat-containing protein P1E11.10.